Consider the following 450-residue polypeptide: Vacuolar cation/proton exchanger 1c (450 aa).

Residues 1 to 73 (MAPPESSHHH…LLGGPAAQLQ (73 aa)) are Cytoplasmic-facing. Residues 28-52 (AAEEEEKKEAAAWTPSSSSSMTGRK) form a disordered region. Residues 74 to 94 (EVLLGTKLYPLFSAVPLAVAA) traverse the membrane as a helical segment. Over 95–101 (ESLRLGR) the chain is Extracellular. Residues 102–122 (VWVFAFSLIGLAPLAERVSFL) form a helical membrane-spanning segment. Residues 123 to 134 (SEHIANTVGPTA) lie on the Cytoplasmic side of the membrane. The chain crosses the membrane as a helical span at residues 135–155 (GGIMNATCGNVPELIIALFAL). The tract at residues 143–178 (GNVPELIIALFALHKNKMEILKWSLLGSILSNLLLV) is cation selection. Over 156 to 170 (HKNKMEILKWSLLGS) the chain is Extracellular. A helical transmembrane segment spans residues 171–191 (ILSNLLLVLGSSLLFGGIVNI). Over 192–201 (GKERPLDKRQ) the chain is Cytoplasmic. A helical transmembrane segment spans residues 202-222 (ADVSIGLLLLGVLCHIATLVS). At 223 to 239 (KYTSSTGDSINSSSVMQ) the chain is on the extracellular side. The helical transmembrane segment at 240 to 260 (LSRSCAIVMLIAYFGSLMFQL) threads the bilayer. The Cytoplasmic segment spans residues 261–287 (KTHRQIFELEEDSSDSSSSEDDATDKS). The chain crosses the membrane as a helical span at residues 288 to 308 (VIGFASAMVWLIGMAVVTAML). Residues 309 to 331 (SSYVVTTIEEASESMGIPVRFIS) are Extracellular-facing. A helical transmembrane segment spans residues 332-352 (IILLPIVGNAAEHAGAIIFAF). Residues 339 to 374 (GNAAEHAGAIIFAFKNKIDISLGITLGSATQISMLV) are cation selection. Residues 353–360 (KNKIDISL) lie on the Cytoplasmic side of the membrane. The helical transmembrane segment at 361–381 (GITLGSATQISMLVVPVILIV) threads the bilayer. Topologically, residues 382–385 (SWVN) are extracellular. Residues 386 to 406 (AIPMDLDFNLLETGSLAMAVI) form a helical membrane-spanning segment. The Cytoplasmic segment spans residues 407-424 (TTAFTLQDDKWHYLKGLN). A helical membrane pass occupies residues 425 to 445 (LVFSYIVIAVCFFVMKALPTL). Residues 446–450 (KKEDD) are Extracellular-facing.

It belongs to the Ca(2+):cation antiporter (CaCA) (TC 2.A.19) family. Cation/proton exchanger (CAX) subfamily. As to expression, expressed in leaf blades.

It is found in the vacuole membrane. In terms of biological role, vacuolar cation/proton exchanger (CAX). Translocates Ca(2+) and other metal ions into vacuoles using the proton gradient formed by H(+)-ATPase and H(+)-pyrophosphatase. This chain is Vacuolar cation/proton exchanger 1c (CAX1c), found in Oryza sativa subsp. japonica (Rice).